The following is a 669-amino-acid chain: GTP-binding protein 1 (669 aa).

Residues Met1–Ala32 form a disordered region. A phosphoserine mark is found at Ser6, Ser8, Ser12, Ser24, Ser25, Ser44, Ser47, and Ser69. Residues Phe158–Tyr389 enclose the tr-type G domain. The G1 stretch occupies residues Gly167–Ser174. Residue Gly167–Ser174 participates in GTP binding. Residues Gly206–Ser210 form a G2 region. Residues Asp252–Gly255 are G3. GTP is bound by residues Asp252–His256 and Thr308–Asp311. Residues Thr308–Asp311 are G4. Residues Ser366–Val368 are G5. Polar residues-rich tracts occupy residues Leu573 to Lys595 and Asp620 to Gln637. Positions Leu573–Cys669 are disordered. At Ser580 the chain carries Phosphoserine. Residues Gly646 to Lys657 show a composition bias toward basic residues.

The protein belongs to the TRAFAC class translation factor GTPase superfamily. Classic translation factor GTPase family. GTPBP1 subfamily. Interacts with EXOSC2/RRP4, EXOSC3/RRP40, EXOSC5/RRP46, HNRNPD, HNRNPR and SYNCRIP. Identified in a complex with HNRNPD, HNRNPL, HNRNPQ, HNRNPR, HNRNPU and AANAT mRNA, but does not bind mRNA by itself. Detected in pineal gland (at protein level).

It localises to the cytoplasm. In terms of biological role, promotes degradation of target mRNA species. Plays a role in the regulation of circadian mRNA stability. Binds GTP and has GTPase activity. The polypeptide is GTP-binding protein 1 (Gtpbp1) (Rattus norvegicus (Rat)).